Here is a 479-residue protein sequence, read N- to C-terminus: Anaerobic nitric oxide reductase flavorubredoxin (479 aa).

The interval 30–210 (LRGSSYNSYL…PFSRLVTPKI (181 aa)) is zinc metallo-hydrolase. Fe cation-binding residues include His79, Glu81, Asp83, His147, Asp166, and His227. In terms of domain architecture, Flavodoxin-like spans 254 to 393 (ITIFYDTMSN…LCREHGREIA (140 aa)). FMN is bound by residues 260–264 (TMSNN) and 342–369 (AFGS…EMSL). Positions 423-479 (GPRMQCSVCQWIYDPAKGEPMQDVAPGTPWSEVPDNFLCPECSLGKDVFEELASEAK) constitute a Rubredoxin-like domain. Positions 428, 431, 461, and 464 each coordinate Fe cation.

In the N-terminal section; belongs to the zinc metallo-hydrolase group 3 family. As to quaternary structure, homotetramer. Fe cation serves as cofactor. It depends on FMN as a cofactor.

It is found in the cytoplasm. It participates in nitrogen metabolism; nitric oxide reduction. In terms of biological role, anaerobic nitric oxide reductase; uses NADH to detoxify nitric oxide (NO), protecting several 4Fe-4S NO-sensitive enzymes. Has at least 2 reductase partners, only one of which (NorW, flavorubredoxin reductase) has been identified. NO probably binds to the di-iron center; electrons enter from the reductase at rubredoxin and are transferred sequentially to the FMN center and the di-iron center. Also able to function as an aerobic oxygen reductase. The polypeptide is Anaerobic nitric oxide reductase flavorubredoxin (norV) (Escherichia coli (strain K12 / DH10B)).